Consider the following 274-residue polypeptide: Thymidylate synthase (274 aa).

Arginine 21 contacts dUMP. Histidine 51 lines the (6R)-5,10-methylene-5,6,7,8-tetrahydrofolate pocket. 123-124 contributes to the dUMP binding site; sequence RR. The active-site Nucleophile is the cysteine 156. DUMP is bound by residues 176-179, asparagine 187, and 217-219; these read RSAD and HIY. Aspartate 179 is a binding site for (6R)-5,10-methylene-5,6,7,8-tetrahydrofolate. (6R)-5,10-methylene-5,6,7,8-tetrahydrofolate is bound at residue serine 273.

The protein belongs to the thymidylate synthase family. Bacterial-type ThyA subfamily. Homodimer.

It localises to the cytoplasm. It carries out the reaction dUMP + (6R)-5,10-methylene-5,6,7,8-tetrahydrofolate = 7,8-dihydrofolate + dTMP. Its pathway is pyrimidine metabolism; dTTP biosynthesis. Catalyzes the reductive methylation of 2'-deoxyuridine-5'-monophosphate (dUMP) to 2'-deoxythymidine-5'-monophosphate (dTMP) while utilizing 5,10-methylenetetrahydrofolate (mTHF) as the methyl donor and reductant in the reaction, yielding dihydrofolate (DHF) as a by-product. This enzymatic reaction provides an intracellular de novo source of dTMP, an essential precursor for DNA biosynthesis. The chain is Thymidylate synthase from Francisella tularensis subsp. novicida (strain U112).